The following is a 391-amino-acid chain: Na(+)/H(+) antiporter NhaA (391 aa).

11 helical membrane-spanning segments follow: residues 14-34, 59-79, 95-115, 124-144, 154-174, 177-197, 213-233, 261-281, 292-312, 331-351, and 363-383; these read AGGI…NSPL, LIHW…GLEV, SLPT…YLIF, VGWA…MALL, VFLL…IAMF, TDLS…LVGL, LILW…GVII, FVIL…GMSL, IALG…FVAV, VAVM…LAFI, and LGIL…LSKV.

It belongs to the NhaA Na(+)/H(+) (TC 2.A.33) antiporter family.

The protein resides in the cell inner membrane. The enzyme catalyses Na(+)(in) + 2 H(+)(out) = Na(+)(out) + 2 H(+)(in). Functionally, na(+)/H(+) antiporter that extrudes sodium in exchange for external protons. The protein is Na(+)/H(+) antiporter NhaA of Shewanella loihica (strain ATCC BAA-1088 / PV-4).